The chain runs to 265 residues: Mlc titration factor A (265 aa).

Positions 111, 148, 152, and 211 each coordinate Zn(2+).

Belongs to the MtfA family. Interacts with Mlc. Zn(2+) serves as cofactor.

It is found in the cytoplasm. In terms of biological role, involved in the modulation of the activity of the glucose-phosphotransferase system (glucose-PTS). Interacts with the transcriptional repressor Mlc, preventing its interaction with DNA and leading to the modulation of expression of genes regulated by Mlc, including ptsG, which encodes the PTS system glucose-specific EIICB component. Functionally, shows zinc-dependent metallopeptidase activity. In Salmonella choleraesuis (strain SC-B67), this protein is Mlc titration factor A.